Consider the following 107-residue polypeptide: uncharacterized protein (107 aa).

This is an uncharacterized protein from Saccharomyces cerevisiae (strain ATCC 204508 / S288c) (Baker's yeast).